Consider the following 518-residue polypeptide: AarF domain-containing kinase 1 (518 aa).

Residues 149–468 enclose the Protein kinase domain; sequence SFEREPLGTA…SKCCVQSSYA (320 aa). ATP contacts are provided by residues 155–163 and Lys-177; that span reads LGTASLAQV. The Proton acceptor role is filled by Asp-309.

This sequence belongs to the protein kinase superfamily. ADCK protein kinase family.

It localises to the mitochondrion. Its function is as follows. Essential for maintaining mitochondrial cristae formation and mitochondrial function by acting via YME1L to regulate the mitochondrial structural proteins Opa1 and Mitofilin. This function is likely to be kinase-independent. Functions in tracheal development and larval molting probably by acting in sterol modification and/or intracellular lipid trafficking. The action of this enzyme is not yet clear. It is not known if it has protein kinase activity and what type of substrate it would phosphorylate (Ser, Thr or Tyr). The sequence is that of AarF domain-containing kinase 1 from Drosophila melanogaster (Fruit fly).